The sequence spans 634 residues: Frizzled and smoothened-like protein D (634 aa).

A signal peptide spans 1-21 (MINKFKFYLIFLKLILILVNC). At 22 to 257 (QNSLNDYGFG…QMDSVINMSK (236 aa)) the chain is on the extracellular side. Residues 34–178 (DESSICTSYI…LTKYGYTANG (145 aa)) form the FZ domain. Asn-126, Asn-168, Asn-215, Asn-243, and Asn-254 each carry an N-linked (GlcNAc...) asparagine glycan. A helical transmembrane segment spans residues 258 to 278 (AMSSISFVLSLFNVITFGLLI). Over 279-287 (KKKSKYNVC) the chain is Cytoplasmic. A helical membrane pass occupies residues 288-308 (IALMAIGSSFIYLSDIINYGV). Residues 309-335 (GIEKQLCPEPGRVATQRVDSLCGFTGS) lie on the Extracellular side of the membrane. The helical transmembrane segment at 336-356 (IFHIGITLCVLWSMTMGIVLY) threads the bilayer. The Cytoplasmic portion of the chain corresponds to 357–368 (SKIKQFKLPNFR). The chain crosses the membrane as a helical span at residues 369–389 (YFLIGNLSFTVVTLIILASAK). Residues 390 to 410 (KFQGGNGFLECWMRDRWYVVA) lie on the Extracellular side of the membrane. A helical membrane pass occupies residues 411 to 431 (IFWIPCGIALLLGVLSICGVI). Residues 432 to 454 (FEIYKISKNVSLKDSKVVIRELK) are Cytoplasmic-facing. A helical transmembrane segment spans residues 455–475 (PFVLVVTVSASLIYLFVFYFD). The Extracellular portion of the chain corresponds to 476 to 513 (SESKYDFYKKGVEDYILCLLTSENPLDECYTVGPNFNS). The chain crosses the membrane as a helical span at residues 514 to 534 (YFMFYFLIRFFGILFFGIFGT). Over 535–634 (SEIARNAWTE…MEIELDSIDI (100 aa)) the chain is Cytoplasmic. The disordered stretch occupies residues 560-624 (VSSSTRGGGG…NNNNNDNNNK (65 aa)). Low complexity-rich tracts occupy residues 572–592 (SGIKSSSSSSNSGVCNNNNST) and 609–622 (DNTIITNNNNNDNN).

The protein belongs to the G-protein coupled receptor Fz/Smo family.

It is found in the membrane. In Dictyostelium discoideum (Social amoeba), this protein is Frizzled and smoothened-like protein D (fslD).